The primary structure comprises 504 residues: Diacylglycerol O-acyltransferase 1B (504 aa).

The segment at 1-72 (MAISDEPESV…VNSQQQNEKQ (72 aa)) is disordered. The span at 24 to 41 (SATSTAGLFNSPETTTDS) shows a compositional bias: polar residues. Over residues 53 to 65 (DDSINSDDAAVNS) the composition is skewed to low complexity. 7 helical membrane passes run 108–128 (HAGL…RLII), 152–172 (WPLF…FIVE), 184–204 (VVVV…VLVI), 209–229 (SAFV…LKLV), 259–279 (YPYN…TLCY), 301–321 (LIIF…PIVQ), and 348–368 (VWLC…AELL). Residues 375-381 (FYKDWWN) carry the FYXDWWN motif motif. Transmembrane regions (helical) follow at residues 416-436 (AAAL…CIAV), 438-458 (CHIF…LVLI), and 471-491 (VGNM…CVLL). The active site involves His-430.

It belongs to the membrane-bound acyltransferase family. Sterol o-acyltransferase subfamily. As to expression, highly expressed in flowers and pods. Expressed at low levels in roots, stems and leaves.

The protein resides in the endoplasmic reticulum membrane. It catalyses the reaction an acyl-CoA + a 1,2-diacyl-sn-glycerol = a triacyl-sn-glycerol + CoA. Its pathway is glycerolipid metabolism; triacylglycerol biosynthesis. Its function is as follows. Major contributors to triacylglycerol (TAG) synthesis and oil accumulation in developing seeds. Catalyzes the acylation of the sn-3 hydroxy group of sn-1,2-diacylglycerol using acyl-CoA. Has a marked preference for oleoyl-CoA and sn-1,2-dioleoylglycerol over vernoloyl-CoA and sn-1,2-divernoloylglycerol. The chain is Diacylglycerol O-acyltransferase 1B from Glycine max (Soybean).